A 286-amino-acid polypeptide reads, in one-letter code: 4-diphosphocytidyl-2-C-methyl-D-erythritol kinase (286 aa).

The active site involves lysine 13. 101–111 provides a ligand contact to ATP; the sequence is PQGAGLGGGSS. Aspartate 143 is an active-site residue.

It belongs to the GHMP kinase family. IspE subfamily.

It carries out the reaction 4-CDP-2-C-methyl-D-erythritol + ATP = 4-CDP-2-C-methyl-D-erythritol 2-phosphate + ADP + H(+). The protein operates within isoprenoid biosynthesis; isopentenyl diphosphate biosynthesis via DXP pathway; isopentenyl diphosphate from 1-deoxy-D-xylulose 5-phosphate: step 3/6. Its function is as follows. Catalyzes the phosphorylation of the position 2 hydroxy group of 4-diphosphocytidyl-2C-methyl-D-erythritol. The chain is 4-diphosphocytidyl-2-C-methyl-D-erythritol kinase from Idiomarina loihiensis (strain ATCC BAA-735 / DSM 15497 / L2-TR).